The primary structure comprises 619 residues: Lysophospholipid acyltransferase (619 aa).

At 1-19 (MYNPVDAVLTKIITNYGID) the chain is on the lumenal side. Residues 20-39 (SFTLRYAICLLGSFPLNAIL) traverse the membrane as a helical segment. The Cytoplasmic segment spans residues 40–51 (KRIPEKRIGLKC). A helical membrane pass occupies residues 52–72 (CFIISMSMFYLFGVLNLVSGF). At 73-92 (RTLFISTMFTYLISRFYRSK) the chain is on the lumenal side. The helical transmembrane segment at 93 to 113 (FMPHLNFMFVMGHLAINHIHA) threads the bilayer. Over 114-231 (QFLNEQTQTT…GERRQIPKNG (118 aa)) the chain is Cytoplasmic. Asp-146 (nucleophile) is an active-site residue. Residues 232–252 (KLALWKVVQGLAWMILSTLGM) form a helical membrane-spanning segment. The Lumenal portion of the chain corresponds to 253–274 (KHFPVKYVLDKDGFPTRSFIFR). The chain crosses the membrane as a helical span at residues 275 to 295 (IHYLFLLGFIHRFKYYAAWTI). The Cytoplasmic portion of the chain corresponds to 296–429 (SEGSCILCGL…TPLPSKKIYD (134 aa)). The active-site Nucleophile is Glu-297. His-382 is an active-site residue. The helical transmembrane segment at 430 to 450 (LVGIYAIKLAFGYMVQPFIIL) threads the bilayer. The Lumenal portion of the chain corresponds to 451–456 (DLKPSL). A helical membrane pass occupies residues 457-477 (MVWGSVYFYVHIIVAFSFFLF). Residues 478–619 (RGPYAKQVTE…SPKPISKKEE (142 aa)) are Cytoplasmic-facing. Phosphoserine is present on Ser-513. A coiled-coil region spans residues 545 to 593 (ELEKWDNAKEDWEDFCKDYKEWRNKNGLEIEEENLSKAFERFKQEFSNA). Positions 592–619 (NAASGSGERVRKMSFSGYSPKPISKKEE) are disordered. A phosphoserine mark is found at Ser-605, Ser-610, and Ser-615.

It belongs to the membrane-bound acyltransferase family.

The protein resides in the endoplasmic reticulum membrane. The enzyme catalyses a 1-acyl-sn-glycero-3-phosphate + an acyl-CoA = a 1,2-diacyl-sn-glycero-3-phosphate + CoA. It catalyses the reaction a 1-acyl-sn-glycero-3-phosphocholine + an acyl-CoA = a 1,2-diacyl-sn-glycero-3-phosphocholine + CoA. The catalysed reaction is 1-acyl-sn-glycero-3-phospho-(1'-sn-glycerol) + an acyl-CoA = a 1,2-diacyl-sn-glycero-3-phospho-(1'-sn-glycerol) + CoA. It carries out the reaction a 1-acyl-sn-glycero-3-phospho-(1D-myo-inositol) + an acyl-CoA = a 1,2-diacyl-sn-glycero-3-phospho-(1D-myo-inositol) + CoA. The enzyme catalyses a 1-acyl-sn-glycero-3-phospho-L-serine + an acyl-CoA = a 1,2-diacyl-sn-glycero-3-phospho-L-serine + CoA. It catalyses the reaction a 1-acyl-sn-glycero-3-phosphoethanolamine + an acyl-CoA = a 1,2-diacyl-sn-glycero-3-phosphoethanolamine + CoA. The catalysed reaction is 1-(9Z-octadecenoyl)-sn-glycero-3-phosphoethanolamine + (9Z)-octadecenoyl-CoA = 1,2-di-(9Z-octadecenoyl)-sn-glycero-3-phosphoethanolamine + CoA. It carries out the reaction 1-(9Z-octadecenoyl)-sn-glycero-3-phosphoethanolamine + (9Z)-hexadecenoyl-CoA = 1-(9Z)-octadecenoyl-2-(9Z)-hexadecenoyl-sn-glycero-3-phosphoethanolamine + CoA. The enzyme catalyses 1-(9Z-octadecenoyl)-sn-glycero-3-phosphoethanolamine + hexadecanoyl-CoA = 1-(9Z-octadecenoyl)-2-hexadecanoyl-sn-glycero-3-phosphoethanolamine + CoA. It catalyses the reaction 1-(9Z-octadecenoyl)-sn-glycero-3-phosphoethanolamine + tetradecanoyl-CoA = 1-(9Z)-octadecenoyl-2-tetradecanoyl-sn-glycero-3-phosphoethanolamine + CoA. The catalysed reaction is 1-(9Z-octadecenoyl)-sn-glycero-3-phosphate + (9Z)-octadecenoyl-CoA = 1,2-di-(9Z-octadecenoyl)-sn-glycero-3-phosphate + CoA. It carries out the reaction (9Z)-hexadecenoyl-CoA + 1-hexadecanoyl-sn-glycero-3-phosphocholine = 1-hexadecanoyl-2-(9Z-hexadecenoyl)-sn-glycero-3-phosphocholine + CoA. The enzyme catalyses 1-hexadecanoyl-sn-glycero-3-phosphocholine + (9Z)-octadecenoyl-CoA = 1-hexadecanoyl-2-(9Z-octadecenoyl)-sn-glycero-3-phosphocholine + CoA. It catalyses the reaction 1-tetradecanoyl-sn-glycero-3-phosphoethanolamine + (9Z)-octadecenoyl-CoA = 1-tetradecanoyl-2-(9Z-octadecenoyl)-sn-glycero-3-phosphoethanolamine + CoA. The catalysed reaction is 1-(9Z-octadecenoyl)-sn-glycero-3-phospho-L-serine + (9Z)-octadecenoyl-CoA = 1,2-di-(9Z)-octadecenoyl-sn-glycero-3-phospho-L-serine + CoA. It carries out the reaction a 1-acyl-sn-glycero-3-phospho-(1D-myo-inositol) + (9Z)-octadecenoyl-CoA = a 1-acyl-2-(9Z-octadecenoyl)-sn-glycero-3-phospho-(1D-myo-inositol) + CoA. It functions in the pathway lipid metabolism; phospholipid metabolism. In terms of biological role, broad specificity membrane-bound O-acyltransferase that mediates the incorporation of unsaturated acyl chains into the sn-2 position of various lysophospholipids. Preferentially acylates lysophosphocholine (LPC), but also lysophosphoethanolamine (LPE), lysophosphatidylglycerol (LPG), lysophosphatidic acid (LPA), lysophosphoethanolamine (LPE), lysophosphoinositol (LPI), and lysophosphoserine (LPS). Prefers an acyl residue to an alkyl residue at the sn-1 position of lysophospholipid acceptors. Accepts acyl chains in acyl-CoA from C-2 to C-20, and shows strong preference for unsaturated acyl-CoAs with 16-20 carbons. Together with SLC1, plays a central role in phosphatidic acid (PA) biosynthesis. PA is the intermediate, from which all glycerophospholipids are synthesized. Can also introduce an acyl chain at the sn-1 position of the lysophosphatidylcholine analog 1-hydroxy-2-hexadecyl-sn-glycero-3-phosphocholine (HHPC). This Saccharomyces cerevisiae (strain ATCC 204508 / S288c) (Baker's yeast) protein is Lysophospholipid acyltransferase.